The primary structure comprises 251 residues: Methionine aminopeptidase (251 aa).

Substrate is bound at residue H79. Positions 96, 107, and 170 each coordinate a divalent metal cation. H177 contributes to the substrate binding site. Residues E204 and E235 each contribute to the a divalent metal cation site.

The protein belongs to the peptidase M24A family. Methionine aminopeptidase type 1 subfamily. Monomer. Requires Co(2+) as cofactor. Zn(2+) is required as a cofactor. Mn(2+) serves as cofactor. It depends on Fe(2+) as a cofactor.

It carries out the reaction Release of N-terminal amino acids, preferentially methionine, from peptides and arylamides.. Removes the N-terminal methionine from nascent proteins. The N-terminal methionine is often cleaved when the second residue in the primary sequence is small and uncharged (Met-Ala-, Cys, Gly, Pro, Ser, Thr, or Val). Requires deformylation of the N(alpha)-formylated initiator methionine before it can be hydrolyzed. This chain is Methionine aminopeptidase, found in Borreliella burgdorferi (strain ATCC 35210 / DSM 4680 / CIP 102532 / B31) (Borrelia burgdorferi).